The primary structure comprises 200 residues: Large ribosomal subunit protein bL25 (200 aa).

The protein belongs to the bacterial ribosomal protein bL25 family. CTC subfamily. Part of the 50S ribosomal subunit; part of the 5S rRNA/L5/L18/L25 subcomplex. Contacts the 5S rRNA. Binds to the 5S rRNA independently of L5 and L18.

Its function is as follows. This is one of the proteins that binds to the 5S RNA in the ribosome where it forms part of the central protuberance. The sequence is that of Large ribosomal subunit protein bL25 from Nocardia farcinica (strain IFM 10152).